Reading from the N-terminus, the 312-residue chain is Elongation factor Ts (312 aa).

The involved in Mg(2+) ion dislocation from EF-Tu stretch occupies residues 80-83 (TDFV).

This sequence belongs to the EF-Ts family.

Its subcellular location is the cytoplasm. Associates with the EF-Tu.GDP complex and induces the exchange of GDP to GTP. It remains bound to the aminoacyl-tRNA.EF-Tu.GTP complex up to the GTP hydrolysis stage on the ribosome. The sequence is that of Elongation factor Ts from Paramagnetospirillum magneticum (strain ATCC 700264 / AMB-1) (Magnetospirillum magneticum).